A 265-amino-acid chain; its full sequence is Protein Rv2993c (265 aa).

Residues Glu114, Glu116, and Asp145 each coordinate a divalent metal cation.

This sequence in the C-terminal section; belongs to the FAH family. The cofactor is a divalent metal cation.

In Mycobacterium tuberculosis (strain ATCC 25618 / H37Rv), this protein is Protein Rv2993c.